A 389-amino-acid chain; its full sequence is Lipid-A-disaccharide synthase (389 aa).

Belongs to the LpxB family.

The catalysed reaction is a lipid X + a UDP-2-N,3-O-bis[(3R)-3-hydroxyacyl]-alpha-D-glucosamine = a lipid A disaccharide + UDP + H(+). Its pathway is bacterial outer membrane biogenesis; LPS lipid A biosynthesis. In terms of biological role, condensation of UDP-2,3-diacylglucosamine and 2,3-diacylglucosamine-1-phosphate to form lipid A disaccharide, a precursor of lipid A, a phosphorylated glycolipid that anchors the lipopolysaccharide to the outer membrane of the cell. In Burkholderia multivorans (strain ATCC 17616 / 249), this protein is Lipid-A-disaccharide synthase.